Reading from the N-terminus, the 334-residue chain is L-lactate dehydrogenase C chain (334 aa).

NAD(+) is bound by residues 30–58 (GQVG…LEDK), Arg100, and Asn139. Substrate contacts are provided by Asn139 and Arg170. Catalysis depends on His194, which acts as the Proton acceptor. Thr249 is a binding site for substrate.

Belongs to the LDH/MDH superfamily. LDH family. As to quaternary structure, homotetramer.

The protein localises to the cytoplasm. It catalyses the reaction (S)-lactate + NAD(+) = pyruvate + NADH + H(+). The protein operates within fermentation; pyruvate fermentation to lactate; (S)-lactate from pyruvate: step 1/1. The protein is L-lactate dehydrogenase C chain (ldhc) of Xenopus laevis (African clawed frog).